We begin with the raw amino-acid sequence, 624 residues long: Interleukin-1 receptor-associated kinase-like 2 (624 aa).

Residues 13–94 form the Death domain; the sequence is LDDLCRNIDT…RAAQIVLSWK (82 aa). In terms of domain architecture, Protein kinase spans 210–475; sequence FDQSHRISEG…LPEACAETWA (266 aa). ATP contacts are provided by residues 216–224, lysine 237, and 337–340; these read ISEGTFADI and KSAN. Disordered regions lie at residues 508–536 and 549–593; these read SLPW…NSSL and RVSS…ETSW. A compositionally biased stretch (polar residues) spans 558 to 577; sequence GNGTAQPSTSGRQEADSSSE.

It belongs to the protein kinase superfamily. TKL Ser/Thr protein kinase family. Pelle subfamily. As to quaternary structure, interacts with MYD88. IL-1 stimulation leads to the formation of a signaling complex which dissociates from the IL-1 receptor following the binding of PELI1.

Its function is as follows. Binds to the IL-1 type I receptor following IL-1 engagement, triggering intracellular signaling cascades leading to transcriptional up-regulation and mRNA stabilization. This Rattus norvegicus (Rat) protein is Interleukin-1 receptor-associated kinase-like 2 (Irak2).